Here is a 245-residue protein sequence, read N- to C-terminus: Tryptophan synthase alpha chain (245 aa).

Residues Glu37 and Asp48 each act as proton acceptor in the active site.

It belongs to the TrpA family. In terms of assembly, tetramer of two alpha and two beta chains.

The catalysed reaction is (1S,2R)-1-C-(indol-3-yl)glycerol 3-phosphate + L-serine = D-glyceraldehyde 3-phosphate + L-tryptophan + H2O. It participates in amino-acid biosynthesis; L-tryptophan biosynthesis; L-tryptophan from chorismate: step 5/5. The alpha subunit is responsible for the aldol cleavage of indoleglycerol phosphate to indole and glyceraldehyde 3-phosphate. This chain is Tryptophan synthase alpha chain, found in Saccharolobus solfataricus (strain ATCC 35092 / DSM 1617 / JCM 11322 / P2) (Sulfolobus solfataricus).